We begin with the raw amino-acid sequence, 203 residues long: Recombination protein RecR (203 aa).

A C4-type zinc finger spans residues 56–71 (CTVCGNVSDDERCRIC). The Toprim domain maps to 79–179 (SVVCVVEEPK…TVTRIASGLP (101 aa)).

It belongs to the RecR family.

Its function is as follows. May play a role in DNA repair. It seems to be involved in an RecBC-independent recombinational process of DNA repair. It may act with RecF and RecO. The chain is Recombination protein RecR from Mycobacterium leprae (strain TN).